A 136-amino-acid polypeptide reads, in one-letter code: Histone H3.1/H3.2 (136 aa).

The interval 1–42 (MARTKQTARKSTGGKAPRKQLASKAARKAAPATGGVKKPHRY) is disordered. The residue at position 5 (lysine 5) is an N6,N6,N6-trimethyllysine; alternate. At lysine 5 the chain carries N6,N6-dimethyllysine; alternate. N6-methyllysine; alternate occurs at positions 5 and 10. N6-acetyllysine; alternate is present on lysine 10. Residue serine 11 is modified to Phosphoserine. Lysine 15 carries the post-translational modification N6,N6-dimethyllysine; alternate. Residues lysine 15, lysine 19, lysine 24, lysine 28, and lysine 37 each carry the N6-acetyllysine; alternate modification. An N6-methyllysine; alternate mark is found at lysine 19, lysine 24, lysine 28, and lysine 37. The segment covering 19 to 32 (KQLASKAARKAAPA) has biased composition (low complexity). N6,N6,N6-trimethyllysine; alternate occurs at positions 28 and 37. Lysine 28 and lysine 37 each carry N6,N6-dimethyllysine; alternate. Residues lysine 57 and lysine 65 each carry the N6-acetyllysine modification. Lysine 80 carries the post-translational modification N6,N6,N6-trimethyllysine; alternate. Position 80 is an N6,N6-dimethyllysine; alternate (lysine 80). Lysine 80 bears the N6-methyllysine; alternate mark.

This sequence belongs to the histone H3 family. As to quaternary structure, the nucleosome is a histone octamer containing two molecules each of H2A, H2B, H3 and H4 assembled in one H3-H4 heterotetramer and two H2A-H2B heterodimers. The octamer wraps approximately 147 bp of DNA. Post-translationally, phosphorylated by ark1 to form H3S10ph in a cell cycle-dependent manner during mitosis and meiosis. H3S10ph is also formed by ssp2, promotes subsequent H3K14ac formation by gcn5, and is required for transcriptional activation through TBP recruitment to the promoters. Dephosphorylation is performed by sds21. In terms of processing, mono-, di- and trimethylated by the COMPASS complex to form H3K4me1/2/3. H3K4me activates gene expression by regulating transcription elongation and plays a role in telomere length maintenance. H3K4me enrichment correlates with transcription levels, and occurs in a 5' to 3' gradient with H3K4me3 enrichment at the 5'-end of genes, shifting to H3K4me2 and then H3K4me1. Methylated by clr4 to form H3K9me1. H3K9me1 represents a specific tag for epigenetic transcriptional repression by recruiting swi6/HP1 to methylated histones. Targeting to histone probably involves clr3 and rik1. Essential for silencing of centromeres and directional switching of the mating type. Methylated by set2 to form H3K36me. H3K36me represses gene expression. Methylated by dot1 to form H3K79me. H3K79me is required for association of SIR proteins with telomeric regions and for telomeric silencing. The COMPASS-mediated formation of H3K4me2/3 and the dot1-mediated formation of H3K79me require H2BK123ub1. Acetylation of histone H3 leads to transcriptional activation. H3K14ac formation by gcn5 is promoted by H3S10ph. H3K14ac can also be formed by esa1. H3K56ac formation occurs predominantly in newly synthesized H3 molecules during G1, S and G2/M of the cell cycle and may be involved in DNA repair.

It is found in the nucleus. Its subcellular location is the chromosome. Its function is as follows. Core component of nucleosome. Nucleosomes wrap and compact DNA into chromatin, limiting DNA accessibility to the cellular machineries which require DNA as a template. Histones thereby play a central role in transcription regulation, DNA repair, DNA replication and chromosomal stability. DNA accessibility is regulated via a complex set of post-translational modifications of histones, also called histone code, and nucleosome remodeling. The chain is Histone H3.1/H3.2 (hht1) from Schizosaccharomyces pombe (strain 972 / ATCC 24843) (Fission yeast).